We begin with the raw amino-acid sequence, 277 residues long: Radial spoke head protein 9 homolog (277 aa).

This sequence belongs to the flagellar radial spoke RSP9 family. As to quaternary structure, component of axonemal radial spoke complexes.

It localises to the cytoplasm. It is found in the cytoskeleton. Its subcellular location is the cilium axoneme. The protein resides in the flagellum axoneme. The protein localises to the cell projection. It localises to the kinocilium. In terms of biological role, functions as part of axonemal radial spoke complexes that play an important part in the motility of sperm and cilia. Required for motility of olfactory and neural cilia and for the structural integrity of ciliary axonemes in both 9+0 and 9+2 motile cilia. Essential for both the radial spoke head assembly and the central pair microtubule stability in ependymal motile cilia. The chain is Radial spoke head protein 9 homolog (rsph9) from Danio rerio (Zebrafish).